The following is a 244-amino-acid chain: Uracil phosphoribosyltransferase (244 aa).

Residues lysine 59, arginine 68, and 102–105 (YSKI) each bind GTP. A 5-phospho-alpha-D-ribose 1-diphosphate-binding site is contributed by arginine 112. Arginine 129 lines the GTP pocket. Arginine 137 contributes to the 5-phospho-alpha-D-ribose 1-diphosphate binding site. Arginine 158 is a binding site for GTP. 5-phospho-alpha-D-ribose 1-diphosphate is bound by residues aspartate 164 and 164–172 (DPMCATAGS). Uracil contacts are provided by residues isoleucine 229 and 234–236 (GDF). Residue aspartate 235 participates in 5-phospho-alpha-D-ribose 1-diphosphate binding.

The protein belongs to the UPRTase family. As to quaternary structure, monomer. Forms homodimers in presence of substrates and homotetramers in the presence of GTP. The cofactor is Mg(2+).

It catalyses the reaction UMP + diphosphate = 5-phospho-alpha-D-ribose 1-diphosphate + uracil. It functions in the pathway pyrimidine metabolism; UMP biosynthesis via salvage pathway; UMP from uracil: step 1/1. With respect to regulation, allosterically activated by GTP. Binding of GTP leads to 5-time activation of the enzyme. Catalyzes the conversion of uracil and 5-phospho-alpha-D-ribose 1-diphosphate (PRPP) to UMP and diphosphate. This is Uracil phosphoribosyltransferase (uprt) from Toxoplasma gondii.